Here is a 521-residue protein sequence, read N- to C-terminus: AAA ATPase forming ring-shaped complexes (521 aa).

A coiled-coil region spans residues 4–44 (TEDLAALNDRLMAKNHALAEALSRAGKELTKAKSQLAQLAQ). 235–240 (GNGKTM) contacts ATP.

This sequence belongs to the AAA ATPase family. In terms of assembly, homohexamer. Assembles into a hexameric ring structure.

The sequence is that of AAA ATPase forming ring-shaped complexes from Bifidobacterium longum (strain DJO10A).